The primary structure comprises 247 residues: DNA-directed RNA polymerase subunit Rpo3 (247 aa).

Belongs to the archaeal Rpo3/eukaryotic RPB3 RNA polymerase subunit family. As to quaternary structure, part of the RNA polymerase complex.

Its subcellular location is the cytoplasm. It catalyses the reaction RNA(n) + a ribonucleoside 5'-triphosphate = RNA(n+1) + diphosphate. DNA-dependent RNA polymerase (RNAP) catalyzes the transcription of DNA into RNA using the four ribonucleoside triphosphates as substrates. This Natronomonas pharaonis (strain ATCC 35678 / DSM 2160 / CIP 103997 / JCM 8858 / NBRC 14720 / NCIMB 2260 / Gabara) (Halobacterium pharaonis) protein is DNA-directed RNA polymerase subunit Rpo3.